We begin with the raw amino-acid sequence, 439 residues long: Ectonucleotide pyrophosphatase/phosphodiesterase family member 7 (439 aa).

A signal peptide spans 1-21 (MGHSAVLLCVALAILPACVTG). At 22 to 414 (APVQRQHKLL…ILRPMLRSGS (393 aa)) the chain is on the extracellular side. 2 residues coordinate Zn(2+): D36 and T72. The interval 69-75 (VTMTSPC) is required for enzyme activity. T72 acts as the Nucleophile in catalysis. N93 is a substrate binding site. N-linked (GlcNAc...) asparagine glycans are attached at residues N97, N118, N143, and N165. Zn(2+)-binding residues include D196, H200, D243, and H244. N-linked (GlcNAc...) asparagine glycosylation occurs at N264. H350 is a binding site for Zn(2+). The chain crosses the membrane as a helical span at residues 415–435 (ASLLSSQHHLVALLVGILTCL). At 436–439 (AKVL) the chain is on the cytoplasmic side.

Zn(2+) is required as a cofactor. In terms of processing, N-glycosylated; required for activity and transport to the plasma membrane. In terms of tissue distribution, expressed in liver and small intestine.

It localises to the cell membrane. It carries out the reaction a sphingomyelin + H2O = phosphocholine + an N-acylsphing-4-enine + H(+). The catalysed reaction is a 1-O-alkyl-2-acetyl-sn-glycero-3-phosphocholine + H2O = a 1-O-alkyl-2-acetyl-sn-glycerol + phosphocholine + H(+). The enzyme catalyses 1-O-octadecyl-2-acetyl-sn-glycero-3-phosphocholine + H2O = 1-O-octadecyl-2-acetyl-sn-glycerol + phosphocholine + H(+). It catalyses the reaction 1-hexadecanoyl-sn-glycero-3-phosphocholine + H2O = 1-hexadecanoyl-sn-glycerol + phosphocholine + H(+). Choline-specific phosphodiesterase that hydrolyzes sphingomyelin releasing the ceramide and phosphocholine and therefore is involved in sphingomyelin digestion, ceramide formation, and fatty acid (FA) absorption in the gastrointestinal tract. Also has phospholipase C activity and can also cleave phosphocholine from palmitoyl lyso-phosphatidylcholine and platelet-activating factor (PAF) leading to its inactivation. Does not have nucleotide pyrophosphatase activity. May promote cholesterol absorption by affecting the levels of sphingomyelin derived from either diet or endogenous sources, in the intestinal lumen. This Mus musculus (Mouse) protein is Ectonucleotide pyrophosphatase/phosphodiesterase family member 7.